The primary structure comprises 277 residues: Pristinamycin IIA synthase subunit B (277 aa).

As to quaternary structure, heterodimer of two subunits, SnaA and SnaB. It depends on FMN as a cofactor.

Its function is as follows. Catalyzes the oxidation of the proline residue of pristinamycin IIB (PIIB) to pristinamycin IIA (PIIA). This Streptomyces pristinaespiralis protein is Pristinamycin IIA synthase subunit B (snaB).